The sequence spans 304 residues: Porphobilinogen deaminase (304 aa).

Cys241 bears the S-(dipyrrolylmethanemethyl)cysteine mark.

The protein belongs to the HMBS family. As to quaternary structure, monomer. Dipyrromethane is required as a cofactor.

It catalyses the reaction 4 porphobilinogen + H2O = hydroxymethylbilane + 4 NH4(+). Its pathway is porphyrin-containing compound metabolism; protoporphyrin-IX biosynthesis; coproporphyrinogen-III from 5-aminolevulinate: step 2/4. Tetrapolymerization of the monopyrrole PBG into the hydroxymethylbilane pre-uroporphyrinogen in several discrete steps. This is Porphobilinogen deaminase from Ruthia magnifica subsp. Calyptogena magnifica.